The chain runs to 308 residues: Glycine--tRNA ligase alpha subunit (308 aa).

It belongs to the class-II aminoacyl-tRNA synthetase family. Tetramer of two alpha and two beta subunits.

The protein resides in the cytoplasm. The enzyme catalyses tRNA(Gly) + glycine + ATP = glycyl-tRNA(Gly) + AMP + diphosphate. The polypeptide is Glycine--tRNA ligase alpha subunit (Brucella abortus (strain 2308)).